The following is a 430-amino-acid chain: Trigger factor (430 aa).

A PPIase FKBP-type domain is found at 163-248 (GDTAVFDFAG…LHEVKTKQVP (86 aa)).

The protein belongs to the FKBP-type PPIase family. Tig subfamily.

Its subcellular location is the cytoplasm. It carries out the reaction [protein]-peptidylproline (omega=180) = [protein]-peptidylproline (omega=0). Functionally, involved in protein export. Acts as a chaperone by maintaining the newly synthesized protein in an open conformation. Functions as a peptidyl-prolyl cis-trans isomerase. In Exiguobacterium sp. (strain ATCC BAA-1283 / AT1b), this protein is Trigger factor.